We begin with the raw amino-acid sequence, 63 residues long: Juvenile hormone esterase, isoform B (63 aa).

An N-linked (GlcNAc...) asparagine glycan is attached at N20.

Belongs to the type-B carboxylesterase/lipase family. Fat body, the site of their biosynthesis, and the hemolymph where it is secreted.

It carries out the reaction juvenile hormone I + H2O = juvenile hormone I carboxylate + methanol + H(+). The catalysed reaction is juvenile hormone III + H2O = juvenile hormone III carboxylate + methanol + H(+). In terms of biological role, JH esterase plays a crucial role in the decrease of JH activity in lepidopteran insects, by hydrolyzing the methyl ester of JH. It is also involved in the transport of JH. This Trichoplusia ni (Cabbage looper) protein is Juvenile hormone esterase, isoform B.